The primary structure comprises 384 residues: 8-amino-7-oxononanoate synthase (384 aa).

Arg-21 serves as a coordination point for substrate. Residue 108-109 coordinates pyridoxal 5'-phosphate; the sequence is GF. His-133 serves as a coordination point for substrate. The pyridoxal 5'-phosphate site is built by Ser-179, His-207, and Thr-233. At Lys-236 the chain carries N6-(pyridoxal phosphate)lysine. Thr-352 contacts substrate.

The protein belongs to the class-II pyridoxal-phosphate-dependent aminotransferase family. BioF subfamily. As to quaternary structure, homodimer. Requires pyridoxal 5'-phosphate as cofactor.

It carries out the reaction 6-carboxyhexanoyl-[ACP] + L-alanine + H(+) = (8S)-8-amino-7-oxononanoate + holo-[ACP] + CO2. It participates in cofactor biosynthesis; biotin biosynthesis. Its function is as follows. Catalyzes the decarboxylative condensation of pimeloyl-[acyl-carrier protein] and L-alanine to produce 8-amino-7-oxononanoate (AON), [acyl-carrier protein], and carbon dioxide. The polypeptide is 8-amino-7-oxononanoate synthase (Escherichia fergusonii (strain ATCC 35469 / DSM 13698 / CCUG 18766 / IAM 14443 / JCM 21226 / LMG 7866 / NBRC 102419 / NCTC 12128 / CDC 0568-73)).